A 247-amino-acid chain; its full sequence is Dihydroorotate dehydrogenase B (NAD(+)), electron transfer subunit (247 aa).

Residues 2–96 (RWKMKARVLS…TGPHGNGFEI (95 aa)) form the FAD-binding FR-type domain. FAD is bound by residues 49-52 (RPFS), 64-66 (LYQ), and 71-72 (GT). The [2Fe-2S] cluster site is built by Cys-210, Cys-215, Cys-218, and Cys-234.

The protein belongs to the PyrK family. As to quaternary structure, heterotetramer of 2 PyrK and 2 PyrD type B subunits. Requires [2Fe-2S] cluster as cofactor. FAD is required as a cofactor.

Its pathway is pyrimidine metabolism; UMP biosynthesis via de novo pathway; orotate from (S)-dihydroorotate (NAD(+) route): step 1/1. Functionally, responsible for channeling the electrons from the oxidation of dihydroorotate from the FMN redox center in the PyrD type B subunit to the ultimate electron acceptor NAD(+). This chain is Dihydroorotate dehydrogenase B (NAD(+)), electron transfer subunit, found in Caldanaerobacter subterraneus subsp. tengcongensis (strain DSM 15242 / JCM 11007 / NBRC 100824 / MB4) (Thermoanaerobacter tengcongensis).